Here is a 426-residue protein sequence, read N- to C-terminus: Glutamyl-tRNA reductase (426 aa).

Substrate-binding positions include 49–52 (TCNR), serine 109, 114–116 (EGQ), and glutamine 120. Residue cysteine 50 is the Nucleophile of the active site. Position 189 to 194 (189 to 194 (GAGETG)) interacts with NADP(+).

The protein belongs to the glutamyl-tRNA reductase family. As to quaternary structure, homodimer.

It carries out the reaction (S)-4-amino-5-oxopentanoate + tRNA(Glu) + NADP(+) = L-glutamyl-tRNA(Glu) + NADPH + H(+). It functions in the pathway porphyrin-containing compound metabolism; protoporphyrin-IX biosynthesis; 5-aminolevulinate from L-glutamyl-tRNA(Glu): step 1/2. The protein operates within porphyrin-containing compound metabolism; chlorophyll biosynthesis. Functionally, catalyzes the NADPH-dependent reduction of glutamyl-tRNA(Glu) to glutamate 1-semialdehyde (GSA). The chain is Glutamyl-tRNA reductase from Chlorobium chlorochromatii (strain CaD3).